A 637-amino-acid chain; its full sequence is Chaperone protein HtpG (637 aa).

Residues 1–330 are a; substrate-binding; that stretch reads MATAPASHAF…TEDLPLNISR (330 aa). A b region spans residues 331 to 551; it reads ETLQENVVVR…GGASTSSMDR (221 aa). Residues 552-637 are c; the sequence is LLRVLHKDES…GDWYKAVRGL (86 aa).

Belongs to the heat shock protein 90 family. Homodimer.

The protein resides in the cytoplasm. Its function is as follows. Molecular chaperone. Has ATPase activity. This is Chaperone protein HtpG from Nitratidesulfovibrio vulgaris (strain ATCC 29579 / DSM 644 / CCUG 34227 / NCIMB 8303 / VKM B-1760 / Hildenborough) (Desulfovibrio vulgaris).